We begin with the raw amino-acid sequence, 118 residues long: Holo-[acyl-carrier-protein] synthase (118 aa).

Mg(2+) contacts are provided by Asp8 and Glu58.

This sequence belongs to the P-Pant transferase superfamily. AcpS family. The cofactor is Mg(2+).

The protein resides in the cytoplasm. The catalysed reaction is apo-[ACP] + CoA = holo-[ACP] + adenosine 3',5'-bisphosphate + H(+). Its function is as follows. Transfers the 4'-phosphopantetheine moiety from coenzyme A to a Ser of acyl-carrier-protein. In Listeria monocytogenes serotype 4a (strain HCC23), this protein is Holo-[acyl-carrier-protein] synthase.